A 342-amino-acid polypeptide reads, in one-letter code: UDP-N-acetylglucosamine--N-acetylmuramyl-(pentapeptide) pyrophosphoryl-undecaprenol N-acetylglucosamine transferase (342 aa).

UDP-N-acetyl-alpha-D-glucosamine-binding positions include 10–12 (TGG), Asn-124, Ser-177, and Gln-275.

This sequence belongs to the glycosyltransferase 28 family. MurG subfamily.

The protein resides in the cell inner membrane. It carries out the reaction di-trans,octa-cis-undecaprenyl diphospho-N-acetyl-alpha-D-muramoyl-L-alanyl-D-glutamyl-meso-2,6-diaminopimeloyl-D-alanyl-D-alanine + UDP-N-acetyl-alpha-D-glucosamine = di-trans,octa-cis-undecaprenyl diphospho-[N-acetyl-alpha-D-glucosaminyl-(1-&gt;4)]-N-acetyl-alpha-D-muramoyl-L-alanyl-D-glutamyl-meso-2,6-diaminopimeloyl-D-alanyl-D-alanine + UDP + H(+). The protein operates within cell wall biogenesis; peptidoglycan biosynthesis. Functionally, cell wall formation. Catalyzes the transfer of a GlcNAc subunit on undecaprenyl-pyrophosphoryl-MurNAc-pentapeptide (lipid intermediate I) to form undecaprenyl-pyrophosphoryl-MurNAc-(pentapeptide)GlcNAc (lipid intermediate II). The protein is UDP-N-acetylglucosamine--N-acetylmuramyl-(pentapeptide) pyrophosphoryl-undecaprenol N-acetylglucosamine transferase of Campylobacter jejuni subsp. jejuni serotype O:6 (strain 81116 / NCTC 11828).